The following is a 101-amino-acid chain: Large ribosomal subunit protein bL9m (101 aa).

The transit peptide at 1–32 directs the protein to the mitochondrion; it reads MSIMKPTTRFFRFNSLELAVSPFQRIYGQLRF.

It belongs to the bacterial ribosomal protein bL9 family. In terms of assembly, component of the mitochondrial large ribosomal subunit (mt-LSU). Mature yeast 74S mitochondrial ribosomes consist of a small (37S) and a large (54S) subunit. The 37S small subunit contains a 15S ribosomal RNA (15S mt-rRNA) and at least 32 different proteins. The 54S large subunit contains a 21S rRNA (21S mt-rRNA) and at least 45 different proteins.

It is found in the mitochondrion. Functionally, component of the mitochondrial ribosome (mitoribosome), a dedicated translation machinery responsible for the synthesis of mitochondrial genome-encoded proteins, including at least some of the essential transmembrane subunits of the mitochondrial respiratory chain. The mitoribosomes are attached to the mitochondrial inner membrane and translation products are cotranslationally integrated into the membrane. The sequence is that of Large ribosomal subunit protein bL9m from Schizosaccharomyces pombe (strain 972 / ATCC 24843) (Fission yeast).